Here is a 97-residue protein sequence, read N- to C-terminus: MKPTTLLLIFTFFAMPGIVYAESPFSSLQSAKEKTTVLQDLRKICTPQASLSDEAWEKLMLSDENNKQHIREAIVAMERNNQSNYWEALGKVECPDM.

This is an uncharacterized protein from Escherichia coli (strain K12).